The following is a 232-amino-acid chain: 5'-methylthioadenosine/S-adenosylhomocysteine nucleosidase (232 aa).

Catalysis depends on E12, which acts as the Proton acceptor. Substrate is bound by residues G78, I152, and 173–174 (ME). D197 acts as the Proton donor in catalysis.

The protein belongs to the PNP/UDP phosphorylase family. MtnN subfamily. Homodimer.

It catalyses the reaction S-adenosyl-L-homocysteine + H2O = S-(5-deoxy-D-ribos-5-yl)-L-homocysteine + adenine. The enzyme catalyses S-methyl-5'-thioadenosine + H2O = 5-(methylsulfanyl)-D-ribose + adenine. The catalysed reaction is 5'-deoxyadenosine + H2O = 5-deoxy-D-ribose + adenine. It participates in amino-acid biosynthesis; L-methionine biosynthesis via salvage pathway; S-methyl-5-thio-alpha-D-ribose 1-phosphate from S-methyl-5'-thioadenosine (hydrolase route): step 1/2. Functionally, catalyzes the irreversible cleavage of the glycosidic bond in both 5'-methylthioadenosine (MTA) and S-adenosylhomocysteine (SAH/AdoHcy) to adenine and the corresponding thioribose, 5'-methylthioribose and S-ribosylhomocysteine, respectively. Also cleaves 5'-deoxyadenosine, a toxic by-product of radical S-adenosylmethionine (SAM) enzymes, into 5-deoxyribose and adenine. Thus, is required for in vivo function of the radical SAM enzymes biotin synthase and lipoic acid synthase, that are inhibited by 5'-deoxyadenosine accumulation. The polypeptide is 5'-methylthioadenosine/S-adenosylhomocysteine nucleosidase (Salmonella dublin (strain CT_02021853)).